Consider the following 491-residue polypeptide: Protein nucleotidyltransferase YdiU (491 aa).

ATP contacts are provided by Gly-94, Gly-96, Arg-97, Lys-117, Asp-129, Gly-130, Arg-180, and Arg-187. Asp-256 (proton acceptor) is an active-site residue. The Mg(2+) site is built by Asn-257 and Asp-266. Asp-266 lines the ATP pocket.

This sequence belongs to the SELO family. Mg(2+) serves as cofactor. Requires Mn(2+) as cofactor.

It carries out the reaction L-seryl-[protein] + ATP = 3-O-(5'-adenylyl)-L-seryl-[protein] + diphosphate. The enzyme catalyses L-threonyl-[protein] + ATP = 3-O-(5'-adenylyl)-L-threonyl-[protein] + diphosphate. It catalyses the reaction L-tyrosyl-[protein] + ATP = O-(5'-adenylyl)-L-tyrosyl-[protein] + diphosphate. The catalysed reaction is L-histidyl-[protein] + UTP = N(tele)-(5'-uridylyl)-L-histidyl-[protein] + diphosphate. It carries out the reaction L-seryl-[protein] + UTP = O-(5'-uridylyl)-L-seryl-[protein] + diphosphate. The enzyme catalyses L-tyrosyl-[protein] + UTP = O-(5'-uridylyl)-L-tyrosyl-[protein] + diphosphate. Functionally, nucleotidyltransferase involved in the post-translational modification of proteins. It can catalyze the addition of adenosine monophosphate (AMP) or uridine monophosphate (UMP) to a protein, resulting in modifications known as AMPylation and UMPylation. In Bacillus cytotoxicus (strain DSM 22905 / CIP 110041 / 391-98 / NVH 391-98), this protein is Protein nucleotidyltransferase YdiU.